Reading from the N-terminus, the 261-residue chain is Glucose 1-dehydrogenase (261 aa).

NADP(+) is bound at residue 11 to 35 (VITGSSTGLGKSMAIRFATEKAKVV). Ser145 is a substrate binding site. Tyr158 acts as the Proton acceptor in catalysis.

This sequence belongs to the short-chain dehydrogenases/reductases (SDR) family. Homotetramer.

It catalyses the reaction D-glucose + NAD(+) = D-glucono-1,5-lactone + NADH + H(+). The enzyme catalyses D-glucose + NADP(+) = D-glucono-1,5-lactone + NADPH + H(+). In Priestia megaterium (Bacillus megaterium), this protein is Glucose 1-dehydrogenase.